The chain runs to 398 residues: S-adenosylmethionine synthase (398 aa).

ATP is bound at residue histidine 17. A Mg(2+)-binding site is contributed by aspartate 19. Glutamate 45 contributes to the K(+) binding site. L-methionine is bound by residues glutamate 58 and glutamine 101. The tract at residues 101–111 (QSPDIAQGVDK) is flexible loop. ATP-binding positions include 176–178 (DGK), 243–244 (RF), aspartate 252, 258–259 (RK), and lysine 279. Aspartate 252 provides a ligand contact to L-methionine. L-methionine is bound at residue lysine 283.

This sequence belongs to the AdoMet synthase family. In terms of assembly, homotetramer; dimer of dimers. The cofactor is Mg(2+). K(+) serves as cofactor.

The protein localises to the cytoplasm. It catalyses the reaction L-methionine + ATP + H2O = S-adenosyl-L-methionine + phosphate + diphosphate. It participates in amino-acid biosynthesis; S-adenosyl-L-methionine biosynthesis; S-adenosyl-L-methionine from L-methionine: step 1/1. In terms of biological role, catalyzes the formation of S-adenosylmethionine (AdoMet) from methionine and ATP. The overall synthetic reaction is composed of two sequential steps, AdoMet formation and the subsequent tripolyphosphate hydrolysis which occurs prior to release of AdoMet from the enzyme. The polypeptide is S-adenosylmethionine synthase (Staphylococcus haemolyticus (strain JCSC1435)).